Reading from the N-terminus, the 129-residue chain is Histone H2B.1 (129 aa).

The span at 1–19 (MAPKAEKKPASKAPAEKKP) shows a compositional bias: basic and acidic residues. The disordered stretch occupies residues 1–37 (MAPKAEKKPASKAPAEKKPAAKKTASTDSKKRTKTRK). N6-acetyllysine; alternate occurs at positions 7 and 8. Residues Lys-7 and Lys-8 each participate in a glycyl lysine isopeptide (Lys-Gly) (interchain with G-Cter in SUMO); alternate cross-link. Position 11 is a phosphoserine (Ser-11). Lys-12 is modified (N6-acetyllysine). Lys-17 carries the N6-acetyllysine; alternate modification. A Glycyl lysine isopeptide (Lys-Gly) (interchain with G-Cter in SUMO); alternate cross-link involves residue Lys-17. Residue Lys-18 forms a Glycyl lysine isopeptide (Lys-Gly) (interchain with G-Cter in SUMO) linkage. Lys-123 participates in a covalent cross-link: Glycyl lysine isopeptide (Lys-Gly) (interchain with G-Cter in ubiquitin).

This sequence belongs to the histone H2B family. The nucleosome is a histone octamer containing two molecules each of H2A, H2B, H3 and H4 assembled in one H3-H4 heterotetramer and two H2A-H2B heterodimers. The octamer wraps approximately 147 bp of DNA. Post-translationally, monoubiquitinated by the UBC2-BRE1 complex to form H2BK123ub1. H2BK123ub1 gives a specific tag for epigenetic transcriptional activation and is also prerequisite for H3K4me and H3K79me formation. H2BK123ub1 also modulates the formation of double-strand breaks during meiosis and is a prerequisite for DNA-damage checkpoint activation. Phosphorylated by STE20 to form H2BS10ph during progression through meiotic prophase. May be correlated with chromosome condensation. In terms of processing, acetylated by GCN5 to form H2BK11ac and H2BK16ac. H2BK16ac can also be formed by ESA1. Acetylation of N-terminal lysines and particularly formation of H2BK11acK16ac has a positive effect on transcription. Post-translationally, sumoylation to form H2BK6su or H2BK7su, and probably also H2BK16su or H2BK17su, occurs preferentially near the telomeres and represses gene transcription.

Its subcellular location is the nucleus. The protein resides in the chromosome. Its function is as follows. Core component of nucleosome. Nucleosomes wrap and compact DNA into chromatin, limiting DNA accessibility to the cellular machineries which require DNA as a template. Histones thereby play a central role in transcription regulation, DNA repair, DNA replication and chromosomal stability. DNA accessibility is regulated via a complex set of post-translational modifications of histones, also called histone code, and nucleosome remodeling. This is Histone H2B.1 (HTB1) from Meyerozyma guilliermondii (strain ATCC 6260 / CBS 566 / DSM 6381 / JCM 1539 / NBRC 10279 / NRRL Y-324) (Yeast).